The chain runs to 261 residues: MAEAGQPRPLTAFAPPPPLWKHFTPDNLKRLEEVKKEASKGEDGKPRKKKWTPAELRALQLPPELRFLVPPEIPMSGQYSVFGELQSLSTTLPSLQEQGIEQLYPSTPTETDPNKPSQPSRPFNHAYYLLKISKSLLLNFLEFVGILSITPEQFQSKVEDLRNLFINAHHLLNLYRPHQARESLIMMMEEQLNRSREEIQQMDKMHAEINGFLEQLKAQGIDVDSASKSGENDTAKRTTGDQDANNANSSRLVWDILDGTD.

Disordered stretches follow at residues 1–55 (MAEA…TPAE) and 224–250 (DSAS…ANSS). Composition is skewed to basic and acidic residues over residues 23–45 (FTPD…EDGK) and 230–240 (GENDTAKRTTG). Polar residues predominate over residues 241-250 (DQDANNANSS).

Belongs to the Mediator complex subunit 7 family. In terms of assembly, component of the Mediator complex.

The protein resides in the nucleus. In terms of biological role, component of the Mediator complex, a coactivator involved in the regulated transcription of nearly all RNA polymerase II-dependent genes. Mediator functions as a bridge to convey information from gene-specific regulatory proteins to the basal RNA polymerase II transcription machinery. Mediator is recruited to promoters by direct interactions with regulatory proteins and serves as a scaffold for the assembly of a functional preinitiation complex with RNA polymerase II and the general transcription factors. The chain is Mediator of RNA polymerase II transcription subunit 7 (med7) from Neosartorya fischeri (strain ATCC 1020 / DSM 3700 / CBS 544.65 / FGSC A1164 / JCM 1740 / NRRL 181 / WB 181) (Aspergillus fischerianus).